A 206-amino-acid chain; its full sequence is Large ribosomal subunit protein bL25 (206 aa).

The tract at residues 184–206 is disordered; it reads AEEAAAEVAEPEVIKKGKEEEEE. Residues 195 to 206 show a composition bias toward basic and acidic residues; that stretch reads EVIKKGKEEEEE.

The protein belongs to the bacterial ribosomal protein bL25 family. CTC subfamily. In terms of assembly, part of the 50S ribosomal subunit; part of the 5S rRNA/L5/L18/L25 subcomplex. Contacts the 5S rRNA. Binds to the 5S rRNA independently of L5 and L18.

In terms of biological role, this is one of the proteins that binds to the 5S RNA in the ribosome where it forms part of the central protuberance. The sequence is that of Large ribosomal subunit protein bL25 from Thermus thermophilus (strain ATCC BAA-163 / DSM 7039 / HB27).